The following is a 185-amino-acid chain: Ribosome-recycling factor (185 aa).

The protein belongs to the RRF family.

The protein resides in the cytoplasm. Functionally, responsible for the release of ribosomes from messenger RNA at the termination of protein biosynthesis. May increase the efficiency of translation by recycling ribosomes from one round of translation to another. The protein is Ribosome-recycling factor of Lactococcus lactis subsp. lactis (strain IL1403) (Streptococcus lactis).